The chain runs to 289 residues: Putative transmembrane protein ORF289 (289 aa).

Residues 1–152 (MAIAKEFLLT…QYTSVVTFRT (152 aa)) lie on the Extracellular side of the membrane. A helical transmembrane segment spans residues 153-173 (LVAPILYFFALFLVPAWSTVL). At 174-234 (KQNPTFPQSQ…NGEVTSTQVN (61 aa)) the chain is on the cytoplasmic side. Residues 235 to 255 (APIFIGVTTPSGVLVLAYNYY) traverse the membrane as a helical segment. The Extracellular segment spans residues 256–289 (SGTISKYVSLTVTTTYGSATVINQFETKTTGGTT).

It is found in the host membrane. This Acidianus sp. F28 (AFV-2) protein is Putative transmembrane protein ORF289.